The primary structure comprises 246 residues: 1-(5-phosphoribosyl)-5-[(5-phosphoribosylamino)methylideneamino] imidazole-4-carboxamide isomerase (246 aa).

Aspartate 7 acts as the Proton acceptor in catalysis. Aspartate 129 acts as the Proton donor in catalysis.

The protein belongs to the HisA/HisF family.

It is found in the cytoplasm. It catalyses the reaction 1-(5-phospho-beta-D-ribosyl)-5-[(5-phospho-beta-D-ribosylamino)methylideneamino]imidazole-4-carboxamide = 5-[(5-phospho-1-deoxy-D-ribulos-1-ylimino)methylamino]-1-(5-phospho-beta-D-ribosyl)imidazole-4-carboxamide. Its pathway is amino-acid biosynthesis; L-histidine biosynthesis; L-histidine from 5-phospho-alpha-D-ribose 1-diphosphate: step 4/9. This Shewanella sediminis (strain HAW-EB3) protein is 1-(5-phosphoribosyl)-5-[(5-phosphoribosylamino)methylideneamino] imidazole-4-carboxamide isomerase.